The primary structure comprises 485 residues: Sulfate adenylyltransferase subunit 1 (485 aa).

The region spanning 17–232 (KDLLRLLTAG…LETVHIDNDH (216 aa)) is the tr-type G domain. The G1 stretch occupies residues 26-33 (GSVDDGKS). A GTP-binding site is contributed by 26–33 (GSVDDGKS). The tract at residues 84–88 (GITID) is G2. The G3 stretch occupies residues 105 to 108 (DTPG). Residues 105 to 109 (DTPGH) and 160 to 163 (NKMD) each bind GTP. The tract at residues 160-163 (NKMD) is G4. The tract at residues 197–199 (SAL) is G5.

The protein belongs to the TRAFAC class translation factor GTPase superfamily. Classic translation factor GTPase family. CysN/NodQ subfamily. Heterodimer composed of CysD, the smaller subunit, and CysN.

It catalyses the reaction sulfate + ATP + H(+) = adenosine 5'-phosphosulfate + diphosphate. Its pathway is sulfur metabolism; hydrogen sulfide biosynthesis; sulfite from sulfate: step 1/3. Its function is as follows. With CysD forms the ATP sulfurylase (ATPS) that catalyzes the adenylation of sulfate producing adenosine 5'-phosphosulfate (APS) and diphosphate, the first enzymatic step in sulfur assimilation pathway. APS synthesis involves the formation of a high-energy phosphoric-sulfuric acid anhydride bond driven by GTP hydrolysis by CysN coupled to ATP hydrolysis by CysD. The chain is Sulfate adenylyltransferase subunit 1 from Bacteroides thetaiotaomicron (strain ATCC 29148 / DSM 2079 / JCM 5827 / CCUG 10774 / NCTC 10582 / VPI-5482 / E50).